Reading from the N-terminus, the 103-residue chain is Cystatin-A (103 aa).

Position 1 is an N-acetylmethionine (M1). The Secondary area of contact motif lies at 52–56 (QVVAG).

Belongs to the cystatin family.

The protein resides in the cytoplasm. Functionally, this is an intracellular thiol proteinase inhibitor. The polypeptide is Cystatin-A (Csta) (Rattus norvegicus (Rat)).